The sequence spans 197 residues: Probable nicotinate-nucleotide adenylyltransferase (197 aa).

This sequence belongs to the NadD family.

It carries out the reaction nicotinate beta-D-ribonucleotide + ATP + H(+) = deamido-NAD(+) + diphosphate. It functions in the pathway cofactor biosynthesis; NAD(+) biosynthesis; deamido-NAD(+) from nicotinate D-ribonucleotide: step 1/1. Functionally, catalyzes the reversible adenylation of nicotinate mononucleotide (NaMN) to nicotinic acid adenine dinucleotide (NaAD). This is Probable nicotinate-nucleotide adenylyltransferase from Thermosipho melanesiensis (strain DSM 12029 / CIP 104789 / BI429).